A 484-amino-acid chain; its full sequence is MKFKQDFFTQLPEFYSQVYPQGITKPEWLAWSDDAAQLIGLSQPTDELLLGLSGNAAVDGATYYAQVYSGHQFGGYTPRLGDGRSIILGEAIGPNGAWDVALKGGGPTPYSRRGDGRAVMRSAVREFLVSEALHHLHVPTTRALAVIGSDLPVWRESQETAAITVRLARSHIRFGHFEFFCHSERGRADKLIQLLNFTITQHYPHLSCDAAGYKAWFLQVVQDTAKMIAHWQAVGFAHGVMNTDNMSILGDSFDFGPFAFLDTFQEDFICNHSDPEGRYAFGQQPGVGLWNLQRLAQALTPVIPSDDLIAILNQYQEALVQTYLRLMRAKLGLSAVDVPSVEQDKQDLDLIGRFTVLMEKNQLDYTQTWRQLGKLDPTSKHSALRDDFIDVSQFDAWYQSYQQRLGAVADIPTWQTERNSVNPKYILRNYLAQEAIIAVEEGNLAPLHLLQKILTQPFAEHAEHEDLAKRPPDWGQGLIMSCSS.

Residues Gly81, Gly83, Arg84, Lys103, Asp115, Gly116, Arg166, and Arg173 each coordinate ATP. Catalysis depends on Asp244, which acts as the Proton acceptor. Mg(2+) is bound by residues Asn245 and Asp254. Asp254 is a binding site for ATP.

The protein belongs to the SELO family. The cofactor is Mg(2+). Mn(2+) is required as a cofactor.

The enzyme catalyses L-seryl-[protein] + ATP = 3-O-(5'-adenylyl)-L-seryl-[protein] + diphosphate. The catalysed reaction is L-threonyl-[protein] + ATP = 3-O-(5'-adenylyl)-L-threonyl-[protein] + diphosphate. It carries out the reaction L-tyrosyl-[protein] + ATP = O-(5'-adenylyl)-L-tyrosyl-[protein] + diphosphate. It catalyses the reaction L-histidyl-[protein] + UTP = N(tele)-(5'-uridylyl)-L-histidyl-[protein] + diphosphate. The enzyme catalyses L-seryl-[protein] + UTP = O-(5'-uridylyl)-L-seryl-[protein] + diphosphate. The catalysed reaction is L-tyrosyl-[protein] + UTP = O-(5'-uridylyl)-L-tyrosyl-[protein] + diphosphate. Its function is as follows. Nucleotidyltransferase involved in the post-translational modification of proteins. It can catalyze the addition of adenosine monophosphate (AMP) or uridine monophosphate (UMP) to a protein, resulting in modifications known as AMPylation and UMPylation. The protein is Protein nucleotidyltransferase YdiU of Shewanella baltica (strain OS185).